Here is a 296-residue protein sequence, read N- to C-terminus: Decaprenyl diphosphate synthase (296 aa).

The tract at residues 1–24 is disordered; it reads MARDARKRTSSNFPQLPPAPDDYP. Asp76 is an active-site residue. Position 76 (Asp76) interacts with Mg(2+). Substrate-binding positions include 76 to 80, Trp81, Arg89, His93, 121 to 124, Trp125, Arg127, Arg168, Arg244, and 250 to 252; these read DGNGR, STEN, and RSS. Asn124 acts as the Proton acceptor in catalysis. Residue Glu263 coordinates Mg(2+). 292 to 294 is a binding site for substrate; the sequence is RFG.

Belongs to the UPP synthase family. In terms of assembly, homodimer. The cofactor is Mg(2+). It depends on Mn(2+) as a cofactor.

Its subcellular location is the cell membrane. It catalyses the reaction (2Z,6E)-farnesyl diphosphate + 7 isopentenyl diphosphate = (2Z,6Z,10Z,14Z,18Z,22Z,26Z,30Z,34E)-decaprenyl diphosphate + 7 diphosphate. The catalysed reaction is n isopentenyl diphosphate + (2E,6E)-farnesyl diphosphate = a di-trans,poly-cis-polyprenyl diphosphate + n diphosphate. With respect to regulation, activated by dithiothreitol and inhibited by EDTA. Its function is as follows. Catalyzes the sequential condensation of isopentenyl diphosphate (IPP) in the cis configuration with (2Z,6E)-farnesyl diphosphate (Z-FPP or EZ-FPP) generating the 50 carbon product trans,polycis-decaprenyl diphosphate. When (2E,6E)-farnesyl diphosphate (E-FPP or EE-FPP) is used in vitro, both primary products decaprenyl diphosphate and (2E,6E,10E)-geranylgeranyl diphosphate (EEE-GGPP) are synthesized. M.tuberculosis does not synthesize (2E,6E,10Z)-geranylgeranyl diphosphate (EEZ-GGPP) and heptaprenyl diphosphate. Can also accept many different allylic substrates, including E-geranyl diphosphate (E-GPP), neryl diphosphate (NPP), and all-trans-geranyl-geranyl diphosphate. The protein is Decaprenyl diphosphate synthase (uppS) of Mycobacterium tuberculosis (strain ATCC 25618 / H37Rv).